Consider the following 217-residue polypeptide: Pyridoxine/pyridoxamine 5'-phosphate oxidase (217 aa).

Residues 13–16 and lysine 71 each bind substrate; that span reads RREY. Residues 66–71, 81–82, arginine 87, lysine 88, and glutamine 110 each bind FMN; these read RIVLLK and YT. Substrate contacts are provided by tyrosine 128, arginine 132, and serine 136. FMN contacts are provided by residues 145-146 and tryptophan 190; that span reads QS. 196 to 198 lines the substrate pocket; that stretch reads RLH. Arginine 200 contributes to the FMN binding site.

Belongs to the pyridoxamine 5'-phosphate oxidase family. Homodimer. It depends on FMN as a cofactor.

It carries out the reaction pyridoxamine 5'-phosphate + O2 + H2O = pyridoxal 5'-phosphate + H2O2 + NH4(+). The catalysed reaction is pyridoxine 5'-phosphate + O2 = pyridoxal 5'-phosphate + H2O2. It participates in cofactor metabolism; pyridoxal 5'-phosphate salvage; pyridoxal 5'-phosphate from pyridoxamine 5'-phosphate: step 1/1. It functions in the pathway cofactor metabolism; pyridoxal 5'-phosphate salvage; pyridoxal 5'-phosphate from pyridoxine 5'-phosphate: step 1/1. Functionally, catalyzes the oxidation of either pyridoxine 5'-phosphate (PNP) or pyridoxamine 5'-phosphate (PMP) into pyridoxal 5'-phosphate (PLP). The protein is Pyridoxine/pyridoxamine 5'-phosphate oxidase of Proteus mirabilis (strain HI4320).